We begin with the raw amino-acid sequence, 348 residues long: Succinylglutamate desuccinylase (348 aa).

Zn(2+) is bound by residues histidine 64, glutamate 67, and histidine 164. Glutamate 228 is a catalytic residue.

Belongs to the AspA/AstE family. Succinylglutamate desuccinylase subfamily. It depends on Zn(2+) as a cofactor.

The catalysed reaction is N-succinyl-L-glutamate + H2O = L-glutamate + succinate. The protein operates within amino-acid degradation; L-arginine degradation via AST pathway; L-glutamate and succinate from L-arginine: step 5/5. In terms of biological role, transforms N(2)-succinylglutamate into succinate and glutamate. In Shewanella amazonensis (strain ATCC BAA-1098 / SB2B), this protein is Succinylglutamate desuccinylase.